The sequence spans 115 residues: MSNLITEITSEQLRTDHPDFRPGDTLSIHVKVVEGTRERIQVFEGVVIKRRGSGISETFTARKISYGVGVERTFPLHSPKIDKIEVKRYGKVRRAKLYYLRSLRGKKARIKEIRR.

The protein belongs to the bacterial ribosomal protein bL19 family.

Functionally, this protein is located at the 30S-50S ribosomal subunit interface and may play a role in the structure and function of the aminoacyl-tRNA binding site. This chain is Large ribosomal subunit protein bL19, found in Shouchella clausii (strain KSM-K16) (Alkalihalobacillus clausii).